The following is a 417-amino-acid chain: Serine hydroxymethyltransferase 2 (417 aa).

Residues L121 and 125–127 (GHL) contribute to the (6S)-5,6,7,8-tetrahydrofolate site. N6-(pyridoxal phosphate)lysine is present on K230. 355-357 (SPF) is a (6S)-5,6,7,8-tetrahydrofolate binding site.

It belongs to the SHMT family. As to quaternary structure, homodimer. It depends on pyridoxal 5'-phosphate as a cofactor.

It is found in the cytoplasm. It catalyses the reaction (6R)-5,10-methylene-5,6,7,8-tetrahydrofolate + glycine + H2O = (6S)-5,6,7,8-tetrahydrofolate + L-serine. It participates in one-carbon metabolism; tetrahydrofolate interconversion. The protein operates within amino-acid biosynthesis; glycine biosynthesis; glycine from L-serine: step 1/1. Catalyzes the reversible interconversion of serine and glycine with tetrahydrofolate (THF) serving as the one-carbon carrier. This reaction serves as the major source of one-carbon groups required for the biosynthesis of purines, thymidylate, methionine, and other important biomolecules. Also exhibits THF-independent aldolase activity toward beta-hydroxyamino acids, producing glycine and aldehydes, via a retro-aldol mechanism. This is Serine hydroxymethyltransferase 2 from Pseudomonas fluorescens (strain ATCC BAA-477 / NRRL B-23932 / Pf-5).